A 433-amino-acid chain; its full sequence is uncharacterized protein (433 aa).

Residues 1–28 (MKICGLEKFRVFLSLISMVSLLCNGVNG) form the signal peptide. The Extracellular portion of the chain corresponds to 29–274 (FTIVRSMAVN…QAELEPKKTG (246 aa)). Positions 235 to 250 (GENANPTANSGTSARS) are enriched in polar residues. Positions 235–266 (GENANPTANSGTSARSNRNEQNKMEEPARNQA) are disordered. A compositionally biased stretch (basic and acidic residues) spans 251 to 266 (NRNEQNKMEEPARNQA). Residues 275–295 (VVVAGVTVSLAAGFVLALATL) traverse the membrane as a helical segment. At 296–433 (LLMKKKQTSL…HDKGTDEDKG (138 aa)) the chain is on the cytoplasmic side. Disordered regions lie at residues 320-340 (EEPV…PSFD) and 413-433 (KVIE…EDKG).

Component of the acid-insoluble and acid-soluble organic matrix of the aragonitic skeleton (at protein level).

The protein resides in the membrane. This is an uncharacterized protein from Acropora millepora (Staghorn coral).